The sequence spans 240 residues: UDP-2,3-diacylglucosamine hydrolase (240 aa).

Mn(2+) is bound by residues D8, H10, D41, N79, and H114. A substrate-binding site is contributed by 79 to 80 (NR). 5 residues coordinate substrate: D122, S160, N164, K167, and H195. 2 residues coordinate Mn(2+): H195 and H197.

The protein belongs to the LpxH family. Requires Mn(2+) as cofactor.

The protein localises to the cell inner membrane. The enzyme catalyses UDP-2-N,3-O-bis[(3R)-3-hydroxytetradecanoyl]-alpha-D-glucosamine + H2O = 2-N,3-O-bis[(3R)-3-hydroxytetradecanoyl]-alpha-D-glucosaminyl 1-phosphate + UMP + 2 H(+). It functions in the pathway glycolipid biosynthesis; lipid IV(A) biosynthesis; lipid IV(A) from (3R)-3-hydroxytetradecanoyl-[acyl-carrier-protein] and UDP-N-acetyl-alpha-D-glucosamine: step 4/6. Functionally, hydrolyzes the pyrophosphate bond of UDP-2,3-diacylglucosamine to yield 2,3-diacylglucosamine 1-phosphate (lipid X) and UMP by catalyzing the attack of water at the alpha-P atom. Involved in the biosynthesis of lipid A, a phosphorylated glycolipid that anchors the lipopolysaccharide to the outer membrane of the cell. In Escherichia coli O157:H7, this protein is UDP-2,3-diacylglucosamine hydrolase.